Here is a 137-residue protein sequence, read N- to C-terminus: MLSGRLVLGLVSMAGRVCLCQGSAGSGAIGPVEAAIRTKLEEALSPEVLELRNESGGHAVPPGSETHFRVAVVSSRFEGLSPLQRHRLVHAALAEELGGPVHALAIQARTPAQWRENSQLDTSPPCLGGNKKTLGTP.

Ser81 carries the post-translational modification Phosphoserine. A disordered region spans residues 114 to 137 (WRENSQLDTSPPCLGGNKKTLGTP).

It belongs to the BolA/IbaG family. In terms of assembly, interacts with GLRX5. As to expression, widely expressed.

It is found in the mitochondrion. Its function is as follows. Acts as a mitochondrial iron-sulfur (Fe-S) cluster assembly factor that facilitates (Fe-S) cluster insertion into a subset of mitochondrial proteins. Probably acts together with the monothiol glutaredoxin GLRX5. May protect cells against oxidative stress. The sequence is that of BolA-like protein 1 from Homo sapiens (Human).